Here is a 381-residue protein sequence, read N- to C-terminus: Cytochrome b (381 aa).

A run of 4 helical transmembrane segments spans residues 33-53 (FGSL…FLAM), 77-98 (WLLR…FLHV), 113-133 (WNIG…GYVL), and 178-198 (FFAF…VHLL). The heme b site is built by His-83 and His-97. Positions 182 and 196 each coordinate heme b. An a ubiquinone-binding site is contributed by His-201. A run of 4 helical transmembrane segments spans residues 226–246 (IKDA…ALFS), 288–308 (LGGV…PLLH), 320–340 (ISQT…WIGG), and 347–367 (FIII…VLMP).

It belongs to the cytochrome b family. The cytochrome bc1 complex contains 11 subunits: 3 respiratory subunits (MT-CYB, CYC1 and UQCRFS1), 2 core proteins (UQCRC1 and UQCRC2) and 6 low-molecular weight proteins (UQCRH/QCR6, UQCRB/QCR7, UQCRQ/QCR8, UQCR10/QCR9, UQCR11/QCR10 and a cleavage product of UQCRFS1). This cytochrome bc1 complex then forms a dimer. Heme b serves as cofactor.

It is found in the mitochondrion inner membrane. Functionally, component of the ubiquinol-cytochrome c reductase complex (complex III or cytochrome b-c1 complex) that is part of the mitochondrial respiratory chain. The b-c1 complex mediates electron transfer from ubiquinol to cytochrome c. Contributes to the generation of a proton gradient across the mitochondrial membrane that is then used for ATP synthesis. The chain is Cytochrome b (MT-CYB) from Pseudantechinus bilarni (Sandstone dibbler).